Reading from the N-terminus, the 165-residue chain is Putative tyrosine-protein phosphatase AMV078 (165 aa).

The 148-residue stretch at 2–149 folds into the Tyrosine-protein phosphatase domain; it reads NISNINNDIY…LKFYNSYKNI (148 aa). The active-site Phosphocysteine intermediate is cysteine 94.

Belongs to the protein-tyrosine phosphatase family. Non-receptor class dual specificity subfamily.

The catalysed reaction is O-phospho-L-tyrosyl-[protein] + H2O = L-tyrosyl-[protein] + phosphate. This is Putative tyrosine-protein phosphatase AMV078 from Amsacta moorei entomopoxvirus (AmEPV).